We begin with the raw amino-acid sequence, 272 residues long: Ribosomal RNA small subunit methyltransferase A (272 aa).

S-adenosyl-L-methionine-binding residues include H13, L15, G40, E61, D85, and N105.

The protein belongs to the class I-like SAM-binding methyltransferase superfamily. rRNA adenine N(6)-methyltransferase family. RsmA subfamily.

It is found in the cytoplasm. The enzyme catalyses adenosine(1518)/adenosine(1519) in 16S rRNA + 4 S-adenosyl-L-methionine = N(6)-dimethyladenosine(1518)/N(6)-dimethyladenosine(1519) in 16S rRNA + 4 S-adenosyl-L-homocysteine + 4 H(+). In terms of biological role, specifically dimethylates two adjacent adenosines (A1518 and A1519) in the loop of a conserved hairpin near the 3'-end of 16S rRNA in the 30S particle. May play a critical role in biogenesis of 30S subunits. The polypeptide is Ribosomal RNA small subunit methyltransferase A (Bacteroides fragilis (strain ATCC 25285 / DSM 2151 / CCUG 4856 / JCM 11019 / LMG 10263 / NCTC 9343 / Onslow / VPI 2553 / EN-2)).